The primary structure comprises 283 residues: Pantothenate synthetase (283 aa).

ATP is bound at residue 30–37 (MGTLHDGH). Residue histidine 37 is the Proton donor of the active site. Glutamine 61 serves as a coordination point for (R)-pantoate. Glutamine 61 contacts beta-alanine. An ATP-binding site is contributed by 148–151 (GLKD). Glutamine 154 provides a ligand contact to (R)-pantoate. Residue 185 to 188 (MSSR) participates in ATP binding.

This sequence belongs to the pantothenate synthetase family. Homodimer.

Its subcellular location is the cytoplasm. It catalyses the reaction (R)-pantoate + beta-alanine + ATP = (R)-pantothenate + AMP + diphosphate + H(+). The protein operates within cofactor biosynthesis; (R)-pantothenate biosynthesis; (R)-pantothenate from (R)-pantoate and beta-alanine: step 1/1. In terms of biological role, catalyzes the condensation of pantoate with beta-alanine in an ATP-dependent reaction via a pantoyl-adenylate intermediate. The polypeptide is Pantothenate synthetase (Leptospira biflexa serovar Patoc (strain Patoc 1 / Ames)).